Reading from the N-terminus, the 482-residue chain is Cobyric acid synthase (482 aa).

A GATase cobBQ-type domain is found at 249–436 (QCKIACLALS…LHGLFTSDDF (188 aa)). The active-site Nucleophile is the Cys-331. The active site involves His-428.

This sequence belongs to the CobB/CobQ family. CobQ subfamily.

The protein operates within cofactor biosynthesis; adenosylcobalamin biosynthesis. Catalyzes amidations at positions B, D, E, and G on adenosylcobyrinic A,C-diamide. NH(2) groups are provided by glutamine, and one molecule of ATP is hydrogenolyzed for each amidation. The polypeptide is Cobyric acid synthase (Bradyrhizobium diazoefficiens (strain JCM 10833 / BCRC 13528 / IAM 13628 / NBRC 14792 / USDA 110)).